The chain runs to 240 residues: MVNGRETLDLTPFAGPPGNVAAWRISDALVDYAEATAFMEARAAAIAAHQAEELVWLLEHPPVYTSGTSGKPEDLRDPRFPFIATGRGGQVTYHGPGQRVAYVMLDLKRRRPDVRAYVAALEETIIRTLDAFNVRGERREDRVGVWVKRPDKGEGHEDKIAAIGVRLKRWVTFHGIAINVEPDLSHFQAIVPCGVTDPRYGVTSLVDLGLPVTMADVDVALRQAFESVFGATRAILPETA.

Residues 49–233 form the BPL/LPL catalytic domain; that stretch reads HQAEELVWLL…AFESVFGATR (185 aa). Substrate is bound by residues 87–94, 162–164, and 175–177; these read RGGQVTYH, AIG, and GIA. Cysteine 193 functions as the Acyl-thioester intermediate in the catalytic mechanism.

Belongs to the LipB family.

The protein resides in the cytoplasm. The enzyme catalyses octanoyl-[ACP] + L-lysyl-[protein] = N(6)-octanoyl-L-lysyl-[protein] + holo-[ACP] + H(+). It participates in protein modification; protein lipoylation via endogenous pathway; protein N(6)-(lipoyl)lysine from octanoyl-[acyl-carrier-protein]: step 1/2. Catalyzes the transfer of endogenously produced octanoic acid from octanoyl-acyl-carrier-protein onto the lipoyl domains of lipoate-dependent enzymes. Lipoyl-ACP can also act as a substrate although octanoyl-ACP is likely to be the physiological substrate. This chain is Octanoyltransferase, found in Bradyrhizobium sp. (strain ORS 278).